Here is a 133-residue protein sequence, read N- to C-terminus: Holo-[acyl-carrier-protein] synthase (133 aa).

Mg(2+) contacts are provided by aspartate 8 and glutamate 57.

The protein belongs to the P-Pant transferase superfamily. AcpS family. The cofactor is Mg(2+).

It is found in the cytoplasm. The enzyme catalyses apo-[ACP] + CoA = holo-[ACP] + adenosine 3',5'-bisphosphate + H(+). Transfers the 4'-phosphopantetheine moiety from coenzyme A to a Ser of acyl-carrier-protein. This chain is Holo-[acyl-carrier-protein] synthase, found in Bartonella quintana (strain Toulouse) (Rochalimaea quintana).